The primary structure comprises 816 residues: H(+)/Cl(-) exchange transporter 5 (816 aa).

Residues 1–124 (MAMWQGAMDN…WALIHSVSDA (124 aa)) lie on the Cytoplasmic side of the membrane. 2 consecutive transmembrane segments (helical) span residues 125–162 (FSGW…ICTG) and 208–231 (VNYF…VKVF). The Selectivity filter part_1 signature appears at 237-241 (GSGIP). Ser238 lines the chloride pocket. Positions 240 to 247 (IPEIKTIL) form an intramembrane region, helical. The next 2 membrane-spanning stretches (helical) occupy residues 256–275 (LGKW…VSSG) and 281–300 (EGPL…HRFN). The Selectivity filter part_2 signature appears at 279–283 (GKEGP). 2 consecutive intramembrane regions (helical) follow at residues 312 to 324 (VLSA…VSVA) and 328 to 336 (PIGGVLFSL). The next 5 helical transmembrane spans lie at 348–366 (LWRS…RSIN), 389–414 (LVPF…IAWC), 422–442 (LGKY…ILAF), 498–518 (MWQL…TFGM), and 523–542 (GLFI…LGVG). Positions 523-527 (GLFIP) match the Selectivity filter part_3 motif. Residue Phe525 participates in chloride binding. Residues 570 to 584 (GLYAMVGAAACLGGV) constitute an intramembrane region (helical). An intramembrane region (note=Loop between two helices) is located at residues 585–587 (TRM). An intramembrane region (helical) is located at residues 588 to 599 (TVSLVVIMFELT). The segment at residues 600-604 (GGLEY) is an intramembrane region (note=Loop between two helices). Residues 605 to 622 (IVPLMAAAMTSKWVADAL) form a helical membrane-spanning segment. At 623 to 816 (GREGIYDAHI…NQDPDSILFN (194 aa)) the chain is on the cytoplasmic side. Tyr628 is a chloride binding site. CBS domains lie at 656 to 720 (MKPR…ARKK) and 752 to 812 (ILDL…DPDS). ATP contacts are provided by residues Thr666, 687 to 689 (YSG), and 794 to 797 (TKKD).

The protein belongs to the chloride channel (TC 2.A.49) family. ClC-5/CLCN5 subfamily. As to quaternary structure, interacts with NEDD4 and NEDD4L. In terms of processing, ubiquitinated by NEDD4L in the presence of albumin; which promotes endocytosis and proteasomal degradation.

The protein resides in the golgi apparatus membrane. It localises to the endosome membrane. The protein localises to the cell membrane. It carries out the reaction 2 chloride(in) + H(+)(out) = 2 chloride(out) + H(+)(in). Its function is as follows. Proton-coupled chloride transporter. Functions as antiport system and exchanges chloride ions against protons. Important for normal acidification of the endosome lumen. May play an important role in renal tubular function. The CLC channel family contains both chloride channels and proton-coupled anion transporters that exchange chloride or another anion for protons. The absence of conserved gating glutamate residues is typical for family members that function as channels. This chain is H(+)/Cl(-) exchange transporter 5 (CLCN5), found in Oryctolagus cuniculus (Rabbit).